We begin with the raw amino-acid sequence, 158 residues long: NAD(P)H-quinone oxidoreductase subunit J, chloroplastic (158 aa).

It belongs to the complex I 30 kDa subunit family. NDH is composed of at least 16 different subunits, 5 of which are encoded in the nucleus.

The protein localises to the plastid. It localises to the chloroplast thylakoid membrane. It carries out the reaction a plastoquinone + NADH + (n+1) H(+)(in) = a plastoquinol + NAD(+) + n H(+)(out). It catalyses the reaction a plastoquinone + NADPH + (n+1) H(+)(in) = a plastoquinol + NADP(+) + n H(+)(out). NDH shuttles electrons from NAD(P)H:plastoquinone, via FMN and iron-sulfur (Fe-S) centers, to quinones in the photosynthetic chain and possibly in a chloroplast respiratory chain. The immediate electron acceptor for the enzyme in this species is believed to be plastoquinone. Couples the redox reaction to proton translocation, and thus conserves the redox energy in a proton gradient. This chain is NAD(P)H-quinone oxidoreductase subunit J, chloroplastic, found in Fagopyrum esculentum subsp. ancestrale (Wild buckwheat).